A 475-amino-acid polypeptide reads, in one-letter code: Ribulose bisphosphate carboxylase large chain (475 aa).

A propeptide spanning residues Met-1 to Ser-2 is cleaved from the precursor. N-acetylproline is present on Pro-3. Residue Lys-14 is modified to N6,N6,N6-trimethyllysine. Residues Asn-123 and Thr-173 each coordinate substrate. Lys-175 serves as the catalytic Proton acceptor. Residue Lys-177 participates in substrate binding. Mg(2+) is bound by residues Lys-201, Asp-203, and Glu-204. Residue Lys-201 is modified to N6-carboxylysine. Residue His-294 is the Proton acceptor of the active site. Substrate contacts are provided by Arg-295, His-327, and Ser-379.

It belongs to the RuBisCO large chain family. Type I subfamily. In terms of assembly, heterohexadecamer of 8 large chains and 8 small chains; disulfide-linked. The disulfide link is formed within the large subunit homodimers. Mg(2+) serves as cofactor. In terms of processing, the disulfide bond which can form in the large chain dimeric partners within the hexadecamer appears to be associated with oxidative stress and protein turnover.

It localises to the plastid. The protein resides in the chloroplast. It catalyses the reaction 2 (2R)-3-phosphoglycerate + 2 H(+) = D-ribulose 1,5-bisphosphate + CO2 + H2O. It carries out the reaction D-ribulose 1,5-bisphosphate + O2 = 2-phosphoglycolate + (2R)-3-phosphoglycerate + 2 H(+). Functionally, ruBisCO catalyzes two reactions: the carboxylation of D-ribulose 1,5-bisphosphate, the primary event in carbon dioxide fixation, as well as the oxidative fragmentation of the pentose substrate in the photorespiration process. Both reactions occur simultaneously and in competition at the same active site. The chain is Ribulose bisphosphate carboxylase large chain from Gossypium hirsutum (Upland cotton).